Consider the following 179-residue polypeptide: Large ribosomal subunit protein uL5 (179 aa).

The protein belongs to the universal ribosomal protein uL5 family. In terms of assembly, part of the 50S ribosomal subunit; part of the 5S rRNA/L5/L18/L25 subcomplex. Contacts the 5S rRNA and the P site tRNA. Forms a bridge to the 30S subunit in the 70S ribosome.

This is one of the proteins that bind and probably mediate the attachment of the 5S RNA into the large ribosomal subunit, where it forms part of the central protuberance. In the 70S ribosome it contacts protein S13 of the 30S subunit (bridge B1b), connecting the 2 subunits; this bridge is implicated in subunit movement. Contacts the P site tRNA; the 5S rRNA and some of its associated proteins might help stabilize positioning of ribosome-bound tRNAs. This is Large ribosomal subunit protein uL5 from Staphylococcus aureus (strain MW2).